Consider the following 616-residue polypeptide: Dihydroxy-acid dehydratase (616 aa).

Asp81 is a binding site for Mg(2+). [2Fe-2S] cluster is bound at residue Cys122. Mg(2+)-binding residues include Asp123 and Lys124. Lys124 is subject to N6-carboxylysine. Cys195 provides a ligand contact to [2Fe-2S] cluster. Residue Glu491 coordinates Mg(2+). The active-site Proton acceptor is the Ser517.

This sequence belongs to the IlvD/Edd family. Homodimer. [2Fe-2S] cluster is required as a cofactor. Mg(2+) serves as cofactor.

It catalyses the reaction (2R)-2,3-dihydroxy-3-methylbutanoate = 3-methyl-2-oxobutanoate + H2O. The catalysed reaction is (2R,3R)-2,3-dihydroxy-3-methylpentanoate = (S)-3-methyl-2-oxopentanoate + H2O. The protein operates within amino-acid biosynthesis; L-isoleucine biosynthesis; L-isoleucine from 2-oxobutanoate: step 3/4. It participates in amino-acid biosynthesis; L-valine biosynthesis; L-valine from pyruvate: step 3/4. In terms of biological role, functions in the biosynthesis of branched-chain amino acids. Catalyzes the dehydration of (2R,3R)-2,3-dihydroxy-3-methylpentanoate (2,3-dihydroxy-3-methylvalerate) into 2-oxo-3-methylpentanoate (2-oxo-3-methylvalerate) and of (2R)-2,3-dihydroxy-3-methylbutanoate (2,3-dihydroxyisovalerate) into 2-oxo-3-methylbutanoate (2-oxoisovalerate), the penultimate precursor to L-isoleucine and L-valine, respectively. The protein is Dihydroxy-acid dehydratase of Pectobacterium atrosepticum (strain SCRI 1043 / ATCC BAA-672) (Erwinia carotovora subsp. atroseptica).